A 313-amino-acid polypeptide reads, in one-letter code: Formimidoylglutamase (313 aa).

Residues H130, D155, H157, D159, D241, and D243 each contribute to the Mn(2+) site.

It belongs to the arginase family. Mn(2+) serves as cofactor.

The enzyme catalyses N-formimidoyl-L-glutamate + H2O = formamide + L-glutamate. It participates in amino-acid degradation; L-histidine degradation into L-glutamate; L-glutamate from N-formimidoyl-L-glutamate (hydrolase route): step 1/1. Its function is as follows. Catalyzes the conversion of N-formimidoyl-L-glutamate to L-glutamate and formamide. This is Formimidoylglutamase from Salmonella agona (strain SL483).